Here is a 346-residue protein sequence, read N- to C-terminus: Archaeosine synthase subunit beta (346 aa).

The Radical SAM core domain maps to 36-276; the sequence is GVQTKTLTVI…LRQAKAAHPE (241 aa). [4Fe-4S] cluster contacts are provided by Cys51, Cys59, and Cys62.

This sequence belongs to the radical SAM superfamily. RaSEA family. Forms a robust complex with the archaeosine synthase alpha subunit ArcS. This complex likely consists of an alpha(2)beta(2) heterotetrameric structure. [4Fe-4S] cluster serves as cofactor.

It carries out the reaction 7-N-[(5S)-5-amino-5-carboxypentyl]formamidino-7-deazaguanosine(15) in tRNA + S-adenosyl-L-methionine = archaeosine(15) in tRNA + L-1-piperideine-6-carboxylate + 5'-deoxyadenosine + L-methionine + 2 H(+). Its pathway is tRNA modification; archaeosine-tRNA biosynthesis. In terms of biological role, radical SAM enzyme involved in the synthesis of archaeosine, a modified nucleoside present in the dihydrouridine loop (D-loop) of archaeal tRNAs. Catalyzes the cleavage of the C(epsilon)-N bond of the lysine moiety of q0kN15-tRNA, leading to the formation of archaeosine at position 15 in tRNAs. The protein is Archaeosine synthase subunit beta of Methanosarcina acetivorans (strain ATCC 35395 / DSM 2834 / JCM 12185 / C2A).